We begin with the raw amino-acid sequence, 159 residues long: Ribosomal RNA large subunit methyltransferase H (159 aa).

Residues leucine 76, glycine 108, and 127-132 (FSKMTF) each bind S-adenosyl-L-methionine.

It belongs to the RNA methyltransferase RlmH family. As to quaternary structure, homodimer.

It is found in the cytoplasm. It catalyses the reaction pseudouridine(1915) in 23S rRNA + S-adenosyl-L-methionine = N(3)-methylpseudouridine(1915) in 23S rRNA + S-adenosyl-L-homocysteine + H(+). Its function is as follows. Specifically methylates the pseudouridine at position 1915 (m3Psi1915) in 23S rRNA. This is Ribosomal RNA large subunit methyltransferase H from Geobacillus thermodenitrificans (strain NG80-2).